Consider the following 90-residue polypeptide: UPF0213 protein lmo0166 (90 aa).

In terms of domain architecture, GIY-YIG spans 5–80 (SEHFFYVLKC…KKLSRKNKDA (76 aa)).

The protein belongs to the UPF0213 family.

This is UPF0213 protein lmo0166 from Listeria monocytogenes serovar 1/2a (strain ATCC BAA-679 / EGD-e).